The primary structure comprises 484 residues: Deoxyribodipyrimidine photo-lyase (484 aa).

The Photolyase/cryptochrome alpha/beta domain occupies 3-132 (APILFWHRRD…RAVQLWDQLL (130 aa)). Coenzyme F420-(gamma-Glu)n-binding positions include 36-38 (CLD), arginine 51, and 101-109 (DIEPYGRDR). The DNA-binding stretch occupies residues 141-148 (GSGNPYSV). Tyrosine 228 lines the FAD pocket. Arginine 232 contributes to the DNA binding site. 240–247 (TSGLSPAL) serves as a coordination point for FAD. A coenzyme F420-(gamma-Glu)n-binding site is contributed by lysine 248. Interaction with DNA regions lie at residues 283–290 (ELAWREFY) and 349–350 (NR). FAD contacts are provided by residues 346–352 (WMHNRCW), 380–382 (DGD), and asparagine 386. Residues glutamine 411 and lysine 472 each coordinate DNA.

It belongs to the DNA photolyase class-1 family. In terms of assembly, monomer. FAD is required as a cofactor. The cofactor is coenzyme F420-(gamma-Glu)n.

The enzyme catalyses cyclobutadipyrimidine (in DNA) = 2 pyrimidine residues (in DNA).. Involved in repair of UV radiation-induced DNA damage. Catalyzes the light-dependent monomerization (300-600 nm) of cyclobutyl pyrimidine dimers (in cis-syn configuration), which are formed between adjacent bases on the same DNA strand upon exposure to ultraviolet radiation. This Synechococcus sp. (strain ATCC 27144 / PCC 6301 / SAUG 1402/1) (Anacystis nidulans) protein is Deoxyribodipyrimidine photo-lyase (phr).